The following is a 1401-amino-acid chain: Bifunctional 3'-5' exonuclease/ATP-dependent helicase WRN (1401 aa).

The segment at 1–271 (METTSLQRKF…FPVTCRNLET (271 aa)) is interaction with WRNIP1. The KBM 1 signature appears at 6-18 (LQRKFPEWMSMQS). Positions 51-223 (YEASDCSFLS…GLIIYQKLGN (173 aa)) constitute a 3'-5' exonuclease domain. Asp76 and Glu78 together coordinate Zn(2+). Lys148 participates in a covalent cross-link: Glycyl lysine isopeptide (Lys-Gly) (interchain with G-Cter in SUMO2). Asp210 is a Zn(2+) binding site. Glycyl lysine isopeptide (Lys-Gly) (interchain with G-Cter in SUMO2) cross-links involve residues Lys235 and Lys246. A disordered region spans residues 401–427 (QAKEEKYNDVSHQLSEHLSPNDDENDS). Ser419, Ser433, and Ser444 each carry phosphoserine. The tract at residues 464–492 (GTNGRLPPEEEDGHGNEAIKEEQEEEDHL) is disordered. Positions 522 to 688 (HSVLEERRDN…ISCLNLKDPQ (167 aa)) constitute a Helicase ATP-binding domain. Residue 535-542 (MATGYGKS) participates in ATP binding. Residues 632–635 (DEAH) carry the DEAH box motif. The Helicase C-terminal domain occupies 713-866 (DLKPFLVRKA…KLKMMVKMEK (154 aa)). Residues Cys873, Cys900, Cys901, and Cys904 each coordinate Zn(2+). The tract at residues 952-958 (RGSNSQR) is interaction with DNA. The tract at residues 1041 to 1106 (LLPSSNPVSP…PSPGTSSSPL (66 aa)) is disordered. The segment covering 1043–1069 (PSSNPVSPETTQHSSNQNPAGLTTKQS) has biased composition (polar residues). Residues 1070–1081 (NLERTHSYKVPE) show a composition bias toward basic and acidic residues. Ser1098 is subject to Phosphoserine. An HRDC domain is found at 1115 to 1194 (LDARTGLYAR…KHFCQVTSVQ (80 aa)). A compositionally biased stretch (polar residues) spans 1323-1332 (GSDSRTQPPC). Residues 1323–1401 (GSDSRTQPPC…AKTKKKGLFS (79 aa)) are disordered. Over residues 1348–1358 (ESCKESKEAVT) the composition is skewed to basic and acidic residues. The residue at position 1364 (Ser1364) is a Phosphoserine. The short motif at 1367-1376 (SKRKLPEWFA) is the KBM 2 element. Positions 1382–1392 (SADTGSSSSMA) are enriched in polar residues. Residues 1388 to 1401 (SSSMAKTKKKGLFS) carry the XLM motif.

This sequence belongs to the helicase family. RecQ subfamily. As to quaternary structure, monomer, and homooligomer. May exist as homodimer, homotrimer, homotetramer and/or homohexamer. Homotetramer, or homohexamer, when bound to DNA. Interacts via its N-terminal domain with WRNIP1. Interacts with EXO1, PCNA and SUPV3L1. Interacts with PML (isoform PML-4). Interacts (via KBM motif) with XRCC5 and XRCC6; promoting recruitment to DNA damage sites. Interacts with RECQL5; this interaction stimulates WRN helicase activity on DNA fork duplexes. Zn(2+) serves as cofactor. Mn(2+) is required as a cofactor. In terms of processing, phosphorylated by PRKDC. As to expression, expressed ubiquitously in most organs at a low level, highly expressed in testis, ovary and spleen.

It localises to the nucleus. It is found in the nucleolus. Its subcellular location is the nucleoplasm. The protein localises to the chromosome. It catalyses the reaction Couples ATP hydrolysis with the unwinding of duplex DNA by translocating in the 3'-5' direction.. It carries out the reaction ATP + H2O = ADP + phosphate + H(+). With respect to regulation, zinc ions stimulate the exonuclease activity. In terms of biological role, multifunctional enzyme that has magnesium and ATP-dependent 3'-5' DNA-helicase activity. Has 3'-&gt;5' exonuclease activity on forked dsDNA. Has no nuclease activity towards single-stranded DNA or blunt-ended double-stranded DNA. Binds preferentially to DNA substrates containing alternate secondary structures, such as replication forks and Holliday junctions. May play an important role in the dissociation of joint DNA molecules that can arise as products of homologous recombination, at stalled replication forks or during DNA repair. Alleviates stalling of DNA polymerases at the site of DNA lesions. Unwinds some G-quadruplex DNA. Plays a role in the formation of DNA replication focal centers; stably associates with foci elements generating binding sites for RP-A. Plays a role in double-strand break repair after gamma-irradiation. In Mus musculus (Mouse), this protein is Bifunctional 3'-5' exonuclease/ATP-dependent helicase WRN (Wrn).